Consider the following 607-residue polypeptide: Inactive metallocarboxypeptidase ECM14 (607 aa).

A signal peptide spans 1–21; that stretch reads MRLFTHGQVLALLAFVNTISA. Positions 22–174 are excised as a propeptide; the sequence is IPSFSTNSYP…QTIYESYPSP (153 aa). The Peptidase M14 domain occupies 202–522; that stretch reads NYQPLSVIVP…NAVMMLGRFL (321 aa). Zn(2+) contacts are provided by histidine 264 and glutamate 267. Residues 264–267, arginine 322, and 339–340 contribute to the substrate site; these read HARE and DR. Residues cysteine 333 and cysteine 356 are joined by a disulfide bond. An N-linked (GlcNAc...) asparagine glycan is attached at asparagine 349. Residue histidine 396 coordinates Zn(2+). 397–398 lines the substrate pocket; that stretch reads SY. The interval 539 to 607 is disordered; that stretch reads QRPNKDDKPI…GWGFRRLRKR (69 aa). Acidic residues predominate over residues 550–571; the sequence is NDDDDDDNDDDDDDDDDADTND. Basic and acidic residues predominate over residues 573 to 590; that stretch reads GIGRKDDSWVPDEYKGDN.

This sequence belongs to the peptidase M14 family. It depends on Zn(2+) as a cofactor.

It is found in the vacuole. The protein resides in the secreted. Inactive carboxypeptidase that may play a role in cell wall organization and biogenesis. This chain is Inactive metallocarboxypeptidase ECM14 (ECM14), found in Ajellomyces capsulatus (strain NAm1 / WU24) (Darling's disease fungus).